The sequence spans 192 residues: Inosine triphosphate pyrophosphatase (192 aa).

8–13 (TTNLKK) lines the ITP pocket. A Mg(2+)-binding site is contributed by glutamate 34. ITP is bound by residues lysine 46, 64–65 (DT), lysine 81, 141–144 (EGFD), lysine 164, and 169–170 (HR).

This sequence belongs to the HAM1 NTPase family. As to quaternary structure, homodimer. Mg(2+) is required as a cofactor. Mn(2+) serves as cofactor.

It localises to the cytoplasm. Its subcellular location is the nucleus. The catalysed reaction is ITP + H2O = IMP + diphosphate + H(+). It catalyses the reaction dITP + H2O = dIMP + diphosphate + H(+). It carries out the reaction XTP + H2O = XMP + diphosphate + H(+). Functionally, pyrophosphatase that hydrolyzes non-canonical purine nucleotides such as inosine triphosphate (ITP), deoxyinosine triphosphate (dITP) or xanthosine 5'-triphosphate (XTP) to their respective monophosphate derivatives. The enzyme does not distinguish between the deoxy- and ribose forms. Probably excludes non-canonical purines from RNA and DNA precursor pools, thus preventing their incorporation into RNA and DNA and avoiding chromosomal lesions. This is Inosine triphosphate pyrophosphatase from Encephalitozoon cuniculi (strain GB-M1) (Microsporidian parasite).